Here is a 357-residue protein sequence, read N- to C-terminus: MNLPRGPVMVDIAGFALTEAERARLSHPLVGGVILFRRNFHNIEQLRALTAEIRALRTPHLLIAVDHEGGRVQRFLDGFTRLPPMRVLGEAWDADRDQALKLAETVGYVLAAELSACGIDLSFTPVLDLDWERCAVIGNRAFHRDPEAVSALAEALQQGLGRGGMMSCGKHYPGHGYVEGDSHHLMPQDDRTLAQIEQDDLVPFARLADAGMGAVMPAHVLYPAVDSQPAGFSKVWLTDILRGRIGFDGVIFSDALDMAGAAGAGTYVQRADAALAAGCDMVLVCNQPEEADAMLAALAPPPQPQLAERLERMAGKSRAEDWQRLIATPDFAAAQAAVRQLAMPKDALAGPQVGEAH.

Residues D66, R74, R140, and 170-171 (KH) each bind substrate. H183 acts as the Proton donor/acceptor in catalysis. D254 serves as the catalytic Nucleophile.

It belongs to the glycosyl hydrolase 3 family. NagZ subfamily.

It localises to the cytoplasm. The catalysed reaction is Hydrolysis of terminal non-reducing N-acetyl-D-hexosamine residues in N-acetyl-beta-D-hexosaminides.. It participates in cell wall biogenesis; peptidoglycan recycling. In terms of biological role, plays a role in peptidoglycan recycling by cleaving the terminal beta-1,4-linked N-acetylglucosamine (GlcNAc) from peptide-linked peptidoglycan fragments, giving rise to free GlcNAc, anhydro-N-acetylmuramic acid and anhydro-N-acetylmuramic acid-linked peptides. The protein is Beta-hexosaminidase of Chromobacterium violaceum (strain ATCC 12472 / DSM 30191 / JCM 1249 / CCUG 213 / NBRC 12614 / NCIMB 9131 / NCTC 9757 / MK).